Here is a 460-residue protein sequence, read N- to C-terminus: MGKEDKAHINVVVIGHVDSGKSTTTGHLIYKCGGIDKRTIEKFEKEAAELGKGSFKYAWVLDKLKAERERGITIDIALWKFETPKYYVTVIDAPGHRDFIKNMITGTSQADCAILIIAAGTGEFEAGISKDGQTREHALLAYTLGVKQLIVAINKMDTTQWSQARFEEIIKETKNFIKKVGYNPATVAFVPISGFNGDNMLEASTNCPWYKGWEKETKAGKSTGKTLLEAIDAIEQPKRPTDKPLRLPLQDVYKIGGIGTVPVGRIETGVLKPGMVVTFAPSNVTTEVKSVEMHHEQLAQGVPGDNVGFNVKNVSVKDIRRGNVAGDSKNDPPVGAASFTAQVIVLNHPGQVGAGYAPVLDCHTAHIACKFAELLEKIDRRTGKAVETSPKFIKSGDAAIVKMIPSKPMCVEAFTDYPPLGRFAVRDMRQTVAVGVIKAVDKTQAVAGKVTKSAAKAAKK.

A N,N,N-trimethylglycine modification is found at G2. K3 bears the N6,N6-dimethyllysine; alternate mark. The residue at position 3 (K3) is an N6-methyllysine; alternate. One can recognise a tr-type G domain in the interval 6–241 (KAHINVVVIG…DAIEQPKRPT (236 aa)). A G1 region spans residues 15–22 (GHVDSGKS). A GTP-binding site is contributed by 15 to 22 (GHVDSGKS). K31 carries the N6-methyllysine modification. The interval 71-75 (GITID) is G2. K80 carries the N6,N6,N6-trimethyllysine modification. Residues 92–95 (DAPG) are G3. GTP-binding positions include 92-96 (DAPGH) and 154-157 (NKMD). A G4 region spans residues 154–157 (NKMD). A G5 region spans residues 193 to 195 (SGF). K317 is subject to N6,N6-dimethyllysine; alternate. K317 bears the N6-methyllysine; alternate mark. K391 carries the N6-methyllysine modification.

Belongs to the TRAFAC class translation factor GTPase superfamily. Classic translation factor GTPase family. EF-Tu/EF-1A subfamily.

It is found in the cytoplasm. This protein promotes the GTP-dependent binding of aminoacyl-tRNA to the A-site of ribosomes during protein biosynthesis. The protein is Elongation factor 1-alpha (TEF) of Sordaria macrospora.